A 378-amino-acid polypeptide reads, in one-letter code: Alginate lyase (378 aa).

A signal peptide spans Met1 to Ala28. Substrate-binding positions include Ser67 to Lys68, His140 to Thr141, and Tyr258. Positions Leu359 to Ser378 are disordered. The segment covering Asp364–Ser378 has biased composition (basic and acidic residues).

The protein belongs to the polysaccharide lyase 5 family.

Its subcellular location is the periplasm. It carries out the reaction Eliminative cleavage of alginate to give oligosaccharides with 4-deoxy-alpha-L-erythro-hex-4-enuronosyl groups at their non-reducing ends and beta-D-mannuronate at their reducing end.. Functionally, catalyzes the depolymerization of alginate by cleaving the beta-1,4 glycosidic bond between two adjacent sugar residues via a beta-elimination mechanism. May serve to degrade mislocalized alginate that is trapped in the periplasmic space. The protein is Alginate lyase of Pseudomonas syringae pv. syringae (strain B728a).